The following is a 612-amino-acid chain: Oligopeptide transport ATP-binding protein OppD (612 aa).

Residues 5–255 (LEVTDLAVTF…RRMPYTVGLL (251 aa)) enclose the ABC transporter 1 domain. ATP is bound by residues Ser43, Gly44, Ser45, Gly46, Lys47, Ser48, Ala49, Tyr61, Gln96, Arg147, Gly158, Glu159, and His213. Residues Cys286, Cys292, Cys299, and Cys317 each contribute to the [4Fe-4S] cluster site. The ABC transporter 2 domain occupies 350 to 600 (VRVRHLVKTY…PKHEYTRRLL (251 aa)). ATP is bound by residues Ser396, Gly397, Ser398, Gly399, Lys400, Ser401, Thr402, Gln445, Arg495, Glu499, Gly503, and His558.

It belongs to the ABC transporter superfamily. The complex is composed of an ATP-binding protein (OppD), two transmembrane proteins (OppB and OppC) and a solute-binding protein (OppA).

The protein resides in the cell inner membrane. The enzyme catalyses a [peptide](out) + ATP + H2O = a [peptide](in) + ADP + phosphate + H(+). Functionally, part of the ABC transporter complex OppABCD involved in the uptake of oligopeptides. Responsible for energy coupling to the transport system. The protein is Oligopeptide transport ATP-binding protein OppD of Mycobacterium bovis (strain ATCC BAA-935 / AF2122/97).